Reading from the N-terminus, the 67-residue chain is Large ribosomal subunit protein bL35 (67 aa).

The span at 1–16 (MPKMKTKSSAKKRFRV) shows a compositional bias: basic residues. Residues 1-23 (MPKMKTKSSAKKRFRVRPGGTVK) form a disordered region.

The protein belongs to the bacterial ribosomal protein bL35 family.

The chain is Large ribosomal subunit protein bL35 from Variovorax paradoxus (strain S110).